The primary structure comprises 211 residues: MRLTAKQVTWLKVSLHLAGLLPFLWLVWAINHGGLGADPVKDIQHFTGRTALKFLLATLLITPLARYVKQPLLIRTRRLLGLWCFAWATLHLTSYALLELGVNNLALLGKELITRPYLTLGIISWVILLALAFTSTQAMQRKLGKHWQQLHNFVYLVAILAPIHYLWSVKIISPQPLIYAGLAVLLLALRYKKLRSLFNRLRKQVHNKLSV.

5 helical membrane passes run 17–37, 54–74, 82–102, 116–136, and 153–173; these read LAGL…GLGA, FLLA…PLLI, LWCF…ELGV, PYLT…FTST, and FVYL…KIIS.

It belongs to the MsrQ family. Heterodimer of a catalytic subunit (MsrP) and a heme-binding subunit (MsrQ). FMN serves as cofactor. It depends on heme b as a cofactor.

It localises to the cell inner membrane. Its function is as follows. Part of the MsrPQ system that repairs oxidized periplasmic proteins containing methionine sulfoxide residues (Met-O), using respiratory chain electrons. Thus protects these proteins from oxidative-stress damage caused by reactive species of oxygen and chlorine generated by the host defense mechanisms. MsrPQ is essential for the maintenance of envelope integrity under bleach stress, rescuing a wide series of structurally unrelated periplasmic proteins from methionine oxidation, including the primary periplasmic chaperone SurA and the lipoprotein Pal. MsrQ provides electrons for reduction to the reductase catalytic subunit MsrP, using the quinone pool of the respiratory chain. This Escherichia coli (strain SMS-3-5 / SECEC) protein is Protein-methionine-sulfoxide reductase heme-binding subunit MsrQ.